Here is a 198-residue protein sequence, read N- to C-terminus: Nuclear transcription factor Y subunit A-4 (198 aa).

Positions 1–47 (MTSSVHELSDNNESHAKKERPDSQTRPQVPSGRSSESIDTNSVYSEP) are disordered. Positions 7–23 (ELSDNNESHAKKERPDS) are enriched in basic and acidic residues. Polar residues predominate over residues 24–44 (QTRPQVPSGRSSESIDTNSVY). The short motif at 101-124 (FVNAKQYHGILRRRQSRAKLEARN) is the Subunit association domain (SAD) element. The NFYA/HAP2-type DNA-binding region spans 131–156 (KPYMHESRHLHAIRRPRGCGGRFLNA). A disordered region spans residues 136-198 (ESRHLHAIRR…MATSGPNGRS (63 aa)). Positions 156–166 (AKKENGDHKEE) are enriched in basic and acidic residues.

The protein belongs to the NFYA/HAP2 subunit family. In terms of assembly, heterotrimeric transcription factor composed of three components, NF-YA, NF-YB and NF-YC. NF-YB and NF-YC must interact and dimerize for NF-YA association and DNA binding. In terms of tissue distribution, expressed in stems, caulines, and senescent flowers.

Its subcellular location is the nucleus. Stimulates the transcription of various genes by recognizing and binding to a CCAAT motif in promoters. The protein is Nuclear transcription factor Y subunit A-4 (NFYA4) of Arabidopsis thaliana (Mouse-ear cress).